The primary structure comprises 270 residues: Phosphonates import ATP-binding protein PhnC 1 (270 aa).

The 244-residue stretch at 2–245 folds into the ABC transporter domain; that stretch reads LVVEGLTCRF…IARELYDLEA (244 aa). Residue 34–41 coordinates ATP; that stretch reads GRSGAGKS.

It belongs to the ABC transporter superfamily. Phosphonates importer (TC 3.A.1.9.1) family. The complex is composed of two ATP-binding proteins (PhnC), two transmembrane proteins (PhnE) and a solute-binding protein (PhnD).

The protein localises to the cell inner membrane. It catalyses the reaction phosphonate(out) + ATP + H2O = phosphonate(in) + ADP + phosphate + H(+). Its function is as follows. Part of the ABC transporter complex PhnCDE involved in phosphonates import. Responsible for energy coupling to the transport system. The protein is Phosphonates import ATP-binding protein PhnC 1 of Rhodopseudomonas palustris (strain ATCC BAA-98 / CGA009).